Consider the following 542-residue polypeptide: 4-coumarate--CoA ligase-like 1 (542 aa).

Residues S189, S190, G191, T192, T193, and K197 each contribute to the ATP site. Y237 provides a ligand contact to (E)-4-coumaroyl-AMP. Residue R258 coordinates CoA. Positions 260–331 (DLRIFLNALI…AKFPNVQVQE (72 aa)) are SBD1. Positions 309, 331, 332, and 336 each coordinate (E)-4-coumaroyl-AMP. Positions 331, 332, 336, 420, and 435 each coordinate ATP. An SBD2 region spans residues 332 to 399 (AYGLTEHSCI…VRSQCVMQGY (68 aa)). (E)-4-coumaroyl-AMP contacts are provided by K437 and K441. The CoA site is built by K443 and G444. Residue K526 participates in ATP binding.

Belongs to the ATP-dependent AMP-binding enzyme family. Interacts with TKPR1, PKSA and PKSB. Mg(2+) serves as cofactor. Mostly confined to anther tapetal cells.

It is found in the endoplasmic reticulum. The enzyme catalyses (E)-4-coumarate + ATP + CoA = (E)-4-coumaroyl-CoA + AMP + diphosphate. It carries out the reaction (E)-4-coumarate + ATP + H(+) = (E)-4-coumaroyl-AMP + diphosphate. The catalysed reaction is (E)-4-coumaroyl-AMP + CoA = (E)-4-coumaroyl-CoA + AMP + H(+). Carboxylate--CoA ligase that may use 4-coumarate as substrate. Follows a two-step reaction mechanism, wherein the carboxylate substrate first undergoes adenylation by ATP, followed by a thioesterification in the presence of CoA to yield the final CoA thioester. This is 4-coumarate--CoA ligase-like 1 from Arabidopsis thaliana (Mouse-ear cress).